The chain runs to 186 residues: MESFSSKDMAMKAQKKILSHMASKSMVQMLIDDTSSEILDELYRISKEHSGNRTEAQKVVKDLVKVVVKVGVLFRHNRFSKEELSLAQDFKKKLHQGVMTAISFQEVEFTFDKAVMTELLTDCRDILLKLVEKHLTLKSFGRIRHVFNHYSDPDLLTNLYTPGGPLWPNLTKICNGLNKLVEEGKL.

It belongs to the TNFAIP8 family. TNFAIP8L2 subfamily.

Its function is as follows. Acts as a negative regulator of innate and adaptive immunity by maintaining immune homeostasis. Negative regulator of Toll-like receptor and T-cell receptor function. Prevents hyperresponsiveness of the immune system and maintains immune homeostasis. Inhibits jun/ap1 and NF-kappa-B activation. Promotes Fas-induced apoptosis. This Salmo salar (Atlantic salmon) protein is Tumor necrosis factor alpha-induced protein 8-like protein 2 (tnfaip8l2).